A 244-amino-acid polypeptide reads, in one-letter code: Phosphoadenosine 5'-phosphosulfate reductase (244 aa).

The Nucleophile; cysteine thiosulfonate intermediate role is filled by cysteine 239.

Belongs to the PAPS reductase family. CysH subfamily.

It localises to the cytoplasm. The catalysed reaction is [thioredoxin]-disulfide + sulfite + adenosine 3',5'-bisphosphate + 2 H(+) = [thioredoxin]-dithiol + 3'-phosphoadenylyl sulfate. Its pathway is sulfur metabolism; hydrogen sulfide biosynthesis; sulfite from sulfate: step 3/3. Its function is as follows. Catalyzes the formation of sulfite from phosphoadenosine 5'-phosphosulfate (PAPS) using thioredoxin as an electron donor. The chain is Phosphoadenosine 5'-phosphosulfate reductase from Salmonella agona (strain SL483).